Reading from the N-terminus, the 302-residue chain is Putative S-adenosyl-L-methionine-dependent methyltransferase MMAR_1068 (302 aa).

Residues Asp127 and 156–157 (DL) each bind S-adenosyl-L-methionine.

This sequence belongs to the UPF0677 family.

Exhibits S-adenosyl-L-methionine-dependent methyltransferase activity. This chain is Putative S-adenosyl-L-methionine-dependent methyltransferase MMAR_1068, found in Mycobacterium marinum (strain ATCC BAA-535 / M).